We begin with the raw amino-acid sequence, 459 residues long: Glycerol-3-phosphate acyltransferase, chloroplastic (459 aa).

The N-terminal 90 residues, 1–90, are a transit peptide targeting the chloroplast; the sequence is MTLTFSSSAA…FNEAAGETPS (90 aa). Positions 229 to 234 match the HXXXXD motif motif; that stretch reads HQSEAD.

The protein belongs to the GPAT/DAPAT family.

Its subcellular location is the plastid. The protein resides in the chloroplast stroma. It catalyses the reaction sn-glycerol 3-phosphate + an acyl-CoA = a 1-acyl-sn-glycero-3-phosphate + CoA. The protein operates within phospholipid metabolism; CDP-diacylglycerol biosynthesis; CDP-diacylglycerol from sn-glycerol 3-phosphate: step 1/3. Its function is as follows. Esterifies acyl-group from acyl-ACP to the sn-1 position of glycerol-3-phosphate. The enzyme from chilling-resistant plants discriminates against non-fluid palmitic acid and selects oleic acid whereas the enzyme from sensitive plants accepts both fatty acids. This is an oleate-selective acyltransferase. The sequence is that of Glycerol-3-phosphate acyltransferase, chloroplastic (ATS1) from Arabidopsis thaliana (Mouse-ear cress).